Reading from the N-terminus, the 79-residue chain is Acyl carrier protein (79 aa).

A Carrier domain is found at 2–77; sequence SDIEARVKKI…NAIDYANTHQ (76 aa). Position 37 is an O-(pantetheine 4'-phosphoryl)serine (Ser-37).

Belongs to the acyl carrier protein (ACP) family. Post-translationally, 4'-phosphopantetheine is transferred from CoA to a specific serine of apo-ACP by AcpS. This modification is essential for activity because fatty acids are bound in thioester linkage to the sulfhydryl of the prosthetic group.

It localises to the cytoplasm. It functions in the pathway lipid metabolism; fatty acid biosynthesis. Its function is as follows. Carrier of the growing fatty acid chain in fatty acid biosynthesis. This chain is Acyl carrier protein, found in Paracidovorax citrulli (strain AAC00-1) (Acidovorax citrulli).